Here is a 204-residue protein sequence, read N- to C-terminus: Golgi to ER traffic protein 1 (204 aa).

Residues 1–11 (MLTLDIDPYTI) are Lumenal-facing. Residues 12 to 31 (LVTSFLILAIQKLVTVIGKQ) form a helical membrane-spanning segment. Topologically, residues 32–116 (KIQLYIWQIY…RIDSITKLAI (85 aa)) are cytoplasmic. The stretch at 78 to 113 (AKWTKINRALDKLKLEVQELNETIAGEKTRIDSITK) forms a coiled coil. Residues 117-137 (TLILTLPIWFLRIFCRKTALL) form a helical membrane-spanning segment. The Lumenal segment spans residues 138–161 (YIRKGILPAYLEWWLALPFFKSGT). Residues 162 to 178 (IGLTCWMFVVNSVLSNL) form a helical membrane-spanning segment. The Cytoplasmic portion of the chain corresponds to 179-204 (IFLISFPFTQKVERPIKPKNEQKTES).

The protein belongs to the WRB/GET1 family. Component of the Golgi to ER traffic (GET) complex, which is composed of GET1, GET2 and GET3. Within the complex, GET1 and GET2 form a heterotetramer which is stabilized by phosphatidylinositol binding and which binds to the GET3 homodimer.

The protein localises to the endoplasmic reticulum membrane. The protein resides in the golgi apparatus membrane. In terms of biological role, required for the post-translational delivery of tail-anchored (TA) proteins to the endoplasmic reticulum. Together with GET2, acts as a membrane receptor for soluble GET3, which recognizes and selectively binds the transmembrane domain of TA proteins in the cytosol. The GET complex cooperates with the HDEL receptor ERD2 to mediate the ATP-dependent retrieval of resident ER proteins that contain a C-terminal H-D-E-L retention signal from the Golgi to the ER. The protein is Golgi to ER traffic protein 1 of Lodderomyces elongisporus (strain ATCC 11503 / CBS 2605 / JCM 1781 / NBRC 1676 / NRRL YB-4239) (Yeast).